We begin with the raw amino-acid sequence, 225 residues long: Two-component response regulator ARR8 (225 aa).

The 136-residue stretch at 10–145 folds into the Response regulatory domain; that stretch reads HVLAVDDSLF…DLTKLKPHMM (136 aa). Asp78 is modified (4-aspartylphosphate).

This sequence belongs to the ARR family. Type-A subfamily. Two-component system major event consists of a His-to-Asp phosphorelay between a sensor histidine kinase (HK) and a response regulator (RR). In plants, the His-to-Asp phosphorelay involves an additional intermediate named Histidine-containing phosphotransfer protein (HPt). This multistep phosphorelay consists of a His-Asp-His-Asp sequential transfer of a phosphate group between first a His and an Asp of the HK protein, followed by the transfer to a conserved His of the HPt protein and finally the transfer to an Asp in the receiver domain of the RR protein. Predominantly expressed in roots.

The protein localises to the nucleus. Its function is as follows. Functions as a response regulator involved in His-to-Asp phosphorelay signal transduction system. Phosphorylation of the Asp residue in the receiver domain activates the ability of the protein to promote the transcription of target genes. Type-A response regulators seem to act as negative regulators of the cytokinin signaling. The polypeptide is Two-component response regulator ARR8 (ARR8) (Arabidopsis thaliana (Mouse-ear cress)).